The following is a 34-amino-acid chain: Photosystem II reaction center protein M (34 aa).

A helical membrane pass occupies residues 5 to 25; it reads ILAFIATALFILIPTAFLLIL.

The protein belongs to the PsbM family. In terms of assembly, PSII is composed of 1 copy each of membrane proteins PsbA, PsbB, PsbC, PsbD, PsbE, PsbF, PsbH, PsbI, PsbJ, PsbK, PsbL, PsbM, PsbT, PsbX, PsbY, PsbZ, Psb30/Ycf12, at least 3 peripheral proteins of the oxygen-evolving complex and a large number of cofactors. It forms dimeric complexes.

The protein localises to the plastid. It is found in the chloroplast thylakoid membrane. One of the components of the core complex of photosystem II (PSII). PSII is a light-driven water:plastoquinone oxidoreductase that uses light energy to abstract electrons from H(2)O, generating O(2) and a proton gradient subsequently used for ATP formation. It consists of a core antenna complex that captures photons, and an electron transfer chain that converts photonic excitation into a charge separation. This subunit is found at the monomer-monomer interface. The protein is Photosystem II reaction center protein M of Angiopteris evecta (Mule's foot fern).